A 180-amino-acid polypeptide reads, in one-letter code: Adenine phosphoribosyltransferase (180 aa).

It belongs to the purine/pyrimidine phosphoribosyltransferase family. Homodimer.

The protein resides in the cytoplasm. It catalyses the reaction AMP + diphosphate = 5-phospho-alpha-D-ribose 1-diphosphate + adenine. The protein operates within purine metabolism; AMP biosynthesis via salvage pathway; AMP from adenine: step 1/1. In terms of biological role, catalyzes a salvage reaction resulting in the formation of AMP, that is energically less costly than de novo synthesis. This chain is Adenine phosphoribosyltransferase, found in Marinomonas sp. (strain MWYL1).